We begin with the raw amino-acid sequence, 203 residues long: Dual-action ribosomal maturation protein DarP (203 aa).

2 disordered regions span residues Met1–Gln31 and Gly183–Ala203. The span at Asp186–Ala203 shows a compositional bias: acidic residues.

The protein belongs to the DarP family.

It is found in the cytoplasm. Functionally, member of a network of 50S ribosomal subunit biogenesis factors which assembles along the 30S-50S interface, preventing incorrect 23S rRNA structures from forming. Promotes peptidyl transferase center (PTC) maturation. In Burkholderia cenocepacia (strain ATCC BAA-245 / DSM 16553 / LMG 16656 / NCTC 13227 / J2315 / CF5610) (Burkholderia cepacia (strain J2315)), this protein is Dual-action ribosomal maturation protein DarP.